A 292-amino-acid chain; its full sequence is Thyroxine 5-deiodinase (292 aa).

Over 1–30 the chain is Cytoplasmic; that stretch reads VVGEGRGALGGAATMLRSLLLHSLRLCAQT. The helical; Signal-anchor for type II membrane protein transmembrane segment at 31-50 threads the bilayer; sequence ASCLVLFPRFLGTAFMLWLL. Residues 51 to 292 lie on the Extracellular side of the membrane; it reads DFLCIRKHLL…QLHGPQPRRV (242 aa). Residue selenocysteine 158 is part of the active site. Residue selenocysteine 158 is a non-standard amino acid, selenocysteine.

It belongs to the iodothyronine deiodinase family. As to quaternary structure, monomer. Homodimer. May undergo minor heretodimerization with DIO1 and DIO2.

It is found in the cell membrane. Its subcellular location is the endosome membrane. It catalyses the reaction 3,3',5'-triiodo-L-thyronine + iodide + A + H(+) = L-thyroxine + AH2. The catalysed reaction is 3,3'-diiodo-L-thyronine + iodide + A + H(+) = 3,3',5-triiodo-L-thyronine + AH2. The enzyme catalyses 3-iodo-L-thyronine + iodide + A + H(+) = 3,5-diiodo-L-thyronine + AH2. It carries out the reaction L-thyronine + iodide + A + H(+) = 3-iodo-L-thyronine + AH2. It catalyses the reaction 3',5'-diiodo-L-thyronine + iodide + A + H(+) = 3,3',5'-triiodo-L-thyronine + AH2. The catalysed reaction is 3'-iodo-L-thyronine + iodide + A + H(+) = 3,3'-diiodo-L-thyronine + AH2. The enzyme catalyses 3,3',5'-triiodothyronamine + iodide + A + H(+) = 3,3',5,5'-tetraiodothyronamine + AH2. It carries out the reaction 3',5'-diiodothyronamine + iodide + A + H(+) = 3,3',5'-triiodothyronamine + AH2. It catalyses the reaction 3,3'-diiodothyronamine + iodide + A + H(+) = 3,3',5-triiodothyronamine + AH2. The catalysed reaction is 3-iodothyronamine + iodide + A + H(+) = 3,5-diiodothyronamine + AH2. The enzyme catalyses 3'-iodothyronamine + iodide + A + H(+) = 3,3'-diiodothyronamine + AH2. It carries out the reaction thyronamine + iodide + A + H(+) = 3-iodothyronamine + AH2. Its function is as follows. Plays a crucial role in the metabolism of thyroid hormones (TH) and has specific roles in TH activation and inactivation by deiodination.Catalyzes the deiodination of L-thyroxine (T4) to 3,3',5'-triiodothyronine (rT3), 3,5,3'-triiodothyronine (T3) to 3,3'-diiodothyronine (3,3'-T2), 3,5-diiodothyronine (3,5-T2) to 3-monoiodothyronine (3-T1), rT3 to 3',5'-diiodothyronine (3',5'-T2) and 3,3'-T2 to 3'-monoiodothyronine (3'-T1) via inner-ring deiodination (IRD). Catalyzes the deiodination of 3-T1 to L-thyronine (T0) via outer-ring deiodination (ORD). Catalyzes the tyrosyl ring deiodinations of 3,3',5,5'-tetraiodothyronamine, 3,3',5'-triiodothyronamine, 3,5,3'-triiodothyronamine, 3,5-diiodothyronamine, 3,3'-diiodothyronamine and 3-iodothyronamine. In Ovis aries (Sheep), this protein is Thyroxine 5-deiodinase (DIO3).